The sequence spans 190 residues: Segregation and condensation protein B (190 aa).

The protein belongs to the ScpB family. In terms of assembly, homodimer. Homodimerization may be required to stabilize the binding of ScpA to the Smc head domains. Component of a cohesin-like complex composed of ScpA, ScpB and the Smc homodimer, in which ScpA and ScpB bind to the head domain of Smc. The presence of the three proteins is required for the association of the complex with DNA.

Its subcellular location is the cytoplasm. Participates in chromosomal partition during cell division. May act via the formation of a condensin-like complex containing Smc and ScpA that pull DNA away from mid-cell into both cell halves. This is Segregation and condensation protein B from Bacillus cereus (strain B4264).